A 51-amino-acid chain; its full sequence is Insulin (51 aa).

Cystine bridges form between Cys-7–Cys-37, Cys-19–Cys-50, and Cys-36–Cys-41.

Belongs to the insulin family. In terms of assembly, heterodimer of a B chain and an A chain linked by two disulfide bonds.

It is found in the secreted. Insulin decreases blood glucose concentration. It increases cell permeability to monosaccharides, amino acids and fatty acids. It accelerates glycolysis, the pentose phosphate cycle, and glycogen synthesis in liver. The chain is Insulin (INS) from Alligator mississippiensis (American alligator).